A 451-amino-acid chain; its full sequence is Exodeoxyribonuclease 7 large subunit (451 aa).

The protein belongs to the XseA family. Heterooligomer composed of large and small subunits.

The protein localises to the cytoplasm. It carries out the reaction Exonucleolytic cleavage in either 5'- to 3'- or 3'- to 5'-direction to yield nucleoside 5'-phosphates.. Bidirectionally degrades single-stranded DNA into large acid-insoluble oligonucleotides, which are then degraded further into small acid-soluble oligonucleotides. The sequence is that of Exodeoxyribonuclease 7 large subunit from Neisseria meningitidis serogroup A / serotype 4A (strain DSM 15465 / Z2491).